The sequence spans 173 residues: Photosystem I assembly protein Ycf3 (173 aa).

TPR repeat units follow at residues 35 to 68 (AFYY…EKDP), 72 to 105 (SFIL…NPNL), and 120 to 153 (GNKL…APYN).

It belongs to the Ycf3 family.

Its subcellular location is the plastid. The protein resides in the chloroplast thylakoid membrane. Functionally, essential for the assembly of the photosystem I (PSI) complex. May act as a chaperone-like factor to guide the assembly of the PSI subunits. The sequence is that of Photosystem I assembly protein Ycf3 from Cyanidium caldarium (Red alga).